We begin with the raw amino-acid sequence, 944 residues long: Neutral alpha-glucosidase AB (944 aa).

The N-terminal stretch at 1 to 32 (MAAIAAVAARRRRSWLSLVLAYLGVCLGITLA) is a signal peptide. C41 and C47 are disulfide-bonded. A Phosphoserine modification is found at S52. N97 carries N-linked (GlcNAc...) asparagine glycosylation. Residues 180-238 (HQRAPRVPQESKDPAEGNGAQPEATPGDGDKPEETQEKAEKDEPGAWEETFKTHSDSKP) form a disordered region. Residues 207–236 (DGDKPEETQEKAEKDEPGAWEETFKTHSDS) show a composition bias toward basic and acidic residues. 2 residues coordinate substrate: D283 and D429. D542 functions as the Nucleophile in the catalytic mechanism. R602 contributes to the substrate binding site. D618 serves as the catalytic Proton donor. Cysteines 633 and 644 form a disulfide. H676 contributes to the substrate binding site.

It belongs to the glycosyl hydrolase 31 family. In terms of assembly, heterodimer of a catalytic alpha subunit (GANAB) and a beta subunit (PRKCSH). Binds glycosylated PTPRC.

Its subcellular location is the endoplasmic reticulum. The protein localises to the golgi apparatus. The protein resides in the melanosome. The enzyme catalyses N(4)-(alpha-D-Glc-(1-&gt;3)-alpha-D-Man-(1-&gt;2)-alpha-D-Man-(1-&gt;2)-alpha-D-Man-(1-&gt;3)-[alpha-D-Man-(1-&gt;2)-alpha-D-Man-(1-&gt;3)-[alpha-D-Man-(1-&gt;2)-alpha-D-Man-(1-&gt;6)]-alpha-D-Man-(1-&gt;6)]-beta-D-Man-(1-&gt;4)-beta-D-GlcNAc-(1-&gt;4)-beta-D-GlcNAc)-L-asparaginyl-[protein] + H2O = N(4)-(alpha-D-Man-(1-&gt;2)-alpha-D-Man-(1-&gt;2)-alpha-D-Man-(1-&gt;3)-[alpha-D-Man-(1-&gt;2)-alpha-D-Man-(1-&gt;3)-[alpha-D-Man-(1-&gt;2)-alpha-D-Man-(1-&gt;6)]-alpha-D-Man-(1-&gt;6)]-beta-D-Man-(1-&gt;4)-beta-D-GlcNAc-(1-&gt;4)-beta-D-GlcNAc)-L-asparaginyl-[protein] (N-glucan mannose isomer 9A1,2,3B1,2,3) + beta-D-glucose. It catalyses the reaction N(4)-(alpha-D-Glc-(1-&gt;3)-alpha-D-Glc-(1-&gt;3)-alpha-D-Man-(1-&gt;2)-alpha-D-Man-(1-&gt;2)-alpha-D-Man-(1-&gt;3)-[alpha-D-Man-(1-&gt;2)-alpha-D-Man-(1-&gt;3)-[alpha-D-Man-(1-&gt;2)-alpha-D-Man-(1-&gt;6)]-alpha-D-Man-(1-&gt;6)]-beta-D-Man-(1-&gt;4)-beta-D-GlcNAc-(1-&gt;4)-beta-D-GlcNAc)-L-asparaginyl-[protein] + H2O = N(4)-(alpha-D-Glc-(1-&gt;3)-alpha-D-Man-(1-&gt;2)-alpha-D-Man-(1-&gt;2)-alpha-D-Man-(1-&gt;3)-[alpha-D-Man-(1-&gt;2)-alpha-D-Man-(1-&gt;3)-[alpha-D-Man-(1-&gt;2)-alpha-D-Man-(1-&gt;6)]-alpha-D-Man-(1-&gt;6)]-beta-D-Man-(1-&gt;4)-beta-D-GlcNAc-(1-&gt;4)-beta-D-GlcNAc)-L-asparaginyl-[protein] + beta-D-glucose. It functions in the pathway glycan metabolism; N-glycan metabolism. Catalytic subunit of glucosidase II that cleaves sequentially the 2 innermost alpha-1,3-linked glucose residues from the Glc(2)Man(9)GlcNAc(2) oligosaccharide precursor of immature glycoproteins. Required for PKD1/Polycystin-1 and PKD2/Polycystin-2 maturation and localization to the cell surface and cilia. This Mus musculus (Mouse) protein is Neutral alpha-glucosidase AB.